A 227-amino-acid chain; its full sequence is Cytochrome c oxidase subunit 2 (227 aa).

The Mitochondrial intermembrane segment spans residues 1 to 14 (MAYPMQLGFQDATS). The chain crosses the membrane as a helical span at residues 15–45 (PIMEELLHFHDHTLMIVFLISSLVLYVISLM). Residues 46–59 (LTTKLTHTSTMDAQ) are Mitochondrial matrix-facing. A helical transmembrane segment spans residues 60–87 (EVETIWTILPAIILILIALPSLRILYMM). Over 88–227 (DEINNPSLTV…YFEKWSASML (140 aa)) the chain is Mitochondrial intermembrane. 6 residues coordinate Cu cation: His161, Cys196, Glu198, Cys200, His204, and Met207. Mg(2+) is bound at residue Glu198.

Belongs to the cytochrome c oxidase subunit 2 family. In terms of assembly, component of the cytochrome c oxidase (complex IV, CIV), a multisubunit enzyme composed of 14 subunits. The complex is composed of a catalytic core of 3 subunits MT-CO1, MT-CO2 and MT-CO3, encoded in the mitochondrial DNA, and 11 supernumerary subunits COX4I, COX5A, COX5B, COX6A, COX6B, COX6C, COX7A, COX7B, COX7C, COX8 and NDUFA4, which are encoded in the nuclear genome. The complex exists as a monomer or a dimer and forms supercomplexes (SCs) in the inner mitochondrial membrane with NADH-ubiquinone oxidoreductase (complex I, CI) and ubiquinol-cytochrome c oxidoreductase (cytochrome b-c1 complex, complex III, CIII), resulting in different assemblies (supercomplex SCI(1)III(2)IV(1) and megacomplex MCI(2)III(2)IV(2)). Found in a complex with TMEM177, COA6, COX18, COX20, SCO1 and SCO2. Interacts with TMEM177 in a COX20-dependent manner. Interacts with COX20. Interacts with COX16. Cu cation is required as a cofactor.

The protein resides in the mitochondrion inner membrane. It catalyses the reaction 4 Fe(II)-[cytochrome c] + O2 + 8 H(+)(in) = 4 Fe(III)-[cytochrome c] + 2 H2O + 4 H(+)(out). In terms of biological role, component of the cytochrome c oxidase, the last enzyme in the mitochondrial electron transport chain which drives oxidative phosphorylation. The respiratory chain contains 3 multisubunit complexes succinate dehydrogenase (complex II, CII), ubiquinol-cytochrome c oxidoreductase (cytochrome b-c1 complex, complex III, CIII) and cytochrome c oxidase (complex IV, CIV), that cooperate to transfer electrons derived from NADH and succinate to molecular oxygen, creating an electrochemical gradient over the inner membrane that drives transmembrane transport and the ATP synthase. Cytochrome c oxidase is the component of the respiratory chain that catalyzes the reduction of oxygen to water. Electrons originating from reduced cytochrome c in the intermembrane space (IMS) are transferred via the dinuclear copper A center (CU(A)) of subunit 2 and heme A of subunit 1 to the active site in subunit 1, a binuclear center (BNC) formed by heme A3 and copper B (CU(B)). The BNC reduces molecular oxygen to 2 water molecules using 4 electrons from cytochrome c in the IMS and 4 protons from the mitochondrial matrix. The protein is Cytochrome c oxidase subunit 2 (MT-CO2) of Gazella spekei (Speke's gazelle).